We begin with the raw amino-acid sequence, 159 residues long: SsrA-binding protein (159 aa).

A compositionally biased stretch (basic and acidic residues) spans 133–147 (KRQDLAKRDAQREMA). Positions 133–159 (KRQDLAKRDAQREMARAAGRRSKGMDD) are disordered. Over residues 150–159 (AGRRSKGMDD) the composition is skewed to basic residues.

This sequence belongs to the SmpB family.

The protein resides in the cytoplasm. Functionally, required for rescue of stalled ribosomes mediated by trans-translation. Binds to transfer-messenger RNA (tmRNA), required for stable association of tmRNA with ribosomes. tmRNA and SmpB together mimic tRNA shape, replacing the anticodon stem-loop with SmpB. tmRNA is encoded by the ssrA gene; the 2 termini fold to resemble tRNA(Ala) and it encodes a 'tag peptide', a short internal open reading frame. During trans-translation Ala-aminoacylated tmRNA acts like a tRNA, entering the A-site of stalled ribosomes, displacing the stalled mRNA. The ribosome then switches to translate the ORF on the tmRNA; the nascent peptide is terminated with the 'tag peptide' encoded by the tmRNA and targeted for degradation. The ribosome is freed to recommence translation, which seems to be the essential function of trans-translation. The polypeptide is SsrA-binding protein (Salinispora arenicola (strain CNS-205)).